Reading from the N-terminus, the 367-residue chain is Holliday junction branch migration complex subunit RuvB (367 aa).

The large ATPase domain (RuvB-L) stretch occupies residues 2–196 (TDEPLTDRPP…FGFTARLDFY (195 aa)). ATP contacts are provided by residues Leu35, Arg36, Gly77, Lys80, Thr81, Thr82, 143–145 (EDF), Arg186, Tyr196, and Arg233. Thr81 contributes to the Mg(2+) binding site. The tract at residues 197–267 (EPADLERIVH…VAQAALAVYE (71 aa)) is small ATPAse domain (RuvB-S). Residues 270–367 (EHGLDRLDRA…IDRDAGEPTA (98 aa)) are head domain (RuvB-H). Residues Arg325 and Arg330 each contribute to the DNA site.

This sequence belongs to the RuvB family. Homohexamer. Forms an RuvA(8)-RuvB(12)-Holliday junction (HJ) complex. HJ DNA is sandwiched between 2 RuvA tetramers; dsDNA enters through RuvA and exits via RuvB. An RuvB hexamer assembles on each DNA strand where it exits the tetramer. Each RuvB hexamer is contacted by two RuvA subunits (via domain III) on 2 adjacent RuvB subunits; this complex drives branch migration. In the full resolvosome a probable DNA-RuvA(4)-RuvB(12)-RuvC(2) complex forms which resolves the HJ.

The protein localises to the cytoplasm. The enzyme catalyses ATP + H2O = ADP + phosphate + H(+). Functionally, the RuvA-RuvB-RuvC complex processes Holliday junction (HJ) DNA during genetic recombination and DNA repair, while the RuvA-RuvB complex plays an important role in the rescue of blocked DNA replication forks via replication fork reversal (RFR). RuvA specifically binds to HJ cruciform DNA, conferring on it an open structure. The RuvB hexamer acts as an ATP-dependent pump, pulling dsDNA into and through the RuvAB complex. RuvB forms 2 homohexamers on either side of HJ DNA bound by 1 or 2 RuvA tetramers; 4 subunits per hexamer contact DNA at a time. Coordinated motions by a converter formed by DNA-disengaged RuvB subunits stimulates ATP hydrolysis and nucleotide exchange. Immobilization of the converter enables RuvB to convert the ATP-contained energy into a lever motion, pulling 2 nucleotides of DNA out of the RuvA tetramer per ATP hydrolyzed, thus driving DNA branch migration. The RuvB motors rotate together with the DNA substrate, which together with the progressing nucleotide cycle form the mechanistic basis for DNA recombination by continuous HJ branch migration. Branch migration allows RuvC to scan DNA until it finds its consensus sequence, where it cleaves and resolves cruciform DNA. The protein is Holliday junction branch migration complex subunit RuvB of Acidothermus cellulolyticus (strain ATCC 43068 / DSM 8971 / 11B).